A 126-amino-acid chain; its full sequence is Histone H2B type 1-H (126 aa).

The segment covering 1–12 (MPDPAKSAPAPK) has biased composition (low complexity). Residues 1–36 (MPDPAKSAPAPKKGSKKAVTKAQKKDGKKRKRSRKE) form a disordered region. Residue Pro-2 is modified to N-acetylproline. N6-(2-hydroxyisobutyryl)lysine; alternate is present on Lys-6. Lys-6 carries the post-translational modification N6-(beta-hydroxybutyryl)lysine; alternate. At Lys-6 the chain carries N6-acetyllysine; alternate. N6-butyryllysine; alternate is present on Lys-6. Lys-6 carries the N6-crotonyllysine; alternate modification. Lys-6 carries the N6-lactoyllysine; alternate modification. Residue Lys-6 forms a Glycyl lysine isopeptide (Lys-Gly) (interchain with G-Cter in SUMO2); alternate linkage. Ser-7 bears the ADP-ribosylserine mark. At Lys-12 the chain carries N6-(beta-hydroxybutyryl)lysine; alternate. Lys-12 and Lys-13 each carry N6-acetyllysine; alternate. An N6-crotonyllysine; alternate mark is found at Lys-12 and Lys-13. N6-lactoyllysine; alternate is present on Lys-12. Position 13 is an N6-(2-hydroxyisobutyryl)lysine; alternate (Lys-13). Ser-15 is modified (phosphoserine; by STK4/MST1). An N6-acetyllysine; alternate mark is found at Lys-16, Lys-17, Lys-21, and Lys-24. Lys-16, Lys-17, Lys-21, and Lys-24 each carry N6-crotonyllysine; alternate. Lys-16, Lys-17, Lys-21, and Lys-24 each carry N6-lactoyllysine; alternate. N6-(beta-hydroxybutyryl)lysine; alternate occurs at positions 17 and 21. Position 17 is an N6-glutaryllysine; alternate (Lys-17). 2 positions are modified to N6-(2-hydroxyisobutyryl)lysine; alternate: Lys-21 and Lys-24. At Lys-21 the chain carries N6-butyryllysine; alternate. Residue Lys-21 forms a Glycyl lysine isopeptide (Lys-Gly) (interchain with G-Cter in SUMO2); alternate linkage. Lys-25 carries the post-translational modification N6-(2-hydroxyisobutyryl)lysine. Lys-35 carries the N6-(2-hydroxyisobutyryl)lysine; alternate modification. Lys-35 is modified (N6-(beta-hydroxybutyryl)lysine; alternate). Lys-35 is modified (N6-crotonyllysine; alternate). Lys-35 carries the post-translational modification N6-glutaryllysine; alternate. Lys-35 carries the N6-succinyllysine; alternate modification. Lys-35 participates in a covalent cross-link: Glycyl lysine isopeptide (Lys-Gly) (interchain with G-Cter in ubiquitin); alternate. The residue at position 36 (Glu-36) is a PolyADP-ribosyl glutamic acid. Ser-37 carries the phosphoserine; by AMPK modification. N6-(2-hydroxyisobutyryl)lysine; alternate occurs at positions 44, 47, and 58. Position 44 is an N6-lactoyllysine; alternate (Lys-44). 2 positions are modified to N6-glutaryllysine; alternate: Lys-44 and Lys-47. Lys-47 bears the N6-methyllysine; alternate mark. Residue Lys-58 is modified to N6,N6-dimethyllysine; alternate. The residue at position 80 (Arg-80) is a Dimethylated arginine. Lys-86 carries the N6-(2-hydroxyisobutyryl)lysine; alternate modification. Lys-86 bears the N6-(beta-hydroxybutyryl)lysine; alternate mark. Position 86 is an N6-acetyllysine; alternate (Lys-86). Lys-86 is modified (N6-lactoyllysine; alternate). An N6,N6,N6-trimethyllysine; alternate modification is found at Lys-86. Residues Arg-87 and Arg-93 each carry the omega-N-methylarginine modification. The residue at position 109 (Lys-109) is an N6-(2-hydroxyisobutyryl)lysine; alternate. Residue Lys-109 is modified to N6-lactoyllysine; alternate. N6-glutaryllysine; alternate is present on Lys-109. Lys-109 carries the post-translational modification N6-methyllysine; alternate. Ser-113 carries an O-linked (GlcNAc) serine glycan. At Thr-116 the chain carries Phosphothreonine. N6-(2-hydroxyisobutyryl)lysine; alternate occurs at positions 117 and 121. 2 positions are modified to N6-(beta-hydroxybutyryl)lysine; alternate: Lys-117 and Lys-121. N6-lactoyllysine; alternate is present on residues Lys-117 and Lys-121. Residues Lys-117 and Lys-121 each carry the N6-glutaryllysine; alternate modification. An N6-succinyllysine; alternate mark is found at Lys-117 and Lys-121. N6-malonyllysine; alternate is present on Lys-117. Lys-117 carries the post-translational modification N6-methylated lysine; alternate. A Glycyl lysine isopeptide (Lys-Gly) (interchain with G-Cter in ubiquitin); alternate cross-link involves residue Lys-121.

Belongs to the histone H2B family. As to quaternary structure, the nucleosome is a histone octamer containing two molecules each of H2A, H2B, H3 and H4 assembled in one H3-H4 heterotetramer and two H2A-H2B heterodimers. The octamer wraps approximately 147 bp of DNA. Found in a complex with PPAR9; DTX3L AND STAT1; the interaction is likely to induce DTX3L-mediated ubiquitination of H2BC9/H2BJ. Monoubiquitination at Lys-35 (H2BK34Ub) by the MSL1/MSL2 dimer is required for histone H3 'Lys-4' (H3K4me) and 'Lys-79' (H3K79me) methylation and transcription activation at specific gene loci, such as HOXA9 and MEIS1 loci. Similarly, monoubiquitination at Lys-121 (H2BK120Ub) by the RNF20/40 complex gives a specific tag for epigenetic transcriptional activation and is also prerequisite for histone H3 'Lys-4' and 'Lys-79' methylation. It also functions cooperatively with the FACT dimer to stimulate elongation by RNA polymerase II. H2BK120Ub also acts as a regulator of mRNA splicing: deubiquitination by USP49 is required for efficient cotranscriptional splicing of a large set of exons. Monoubiquitinated by DTX3L upon encephalomyocarditis virus (EMCV)-mediated infection. In terms of processing, phosphorylation at Ser-37 (H2BS36ph) by AMPK in response to stress promotes transcription. Phosphorylated on Ser-15 (H2BS14ph) by STK4/MST1 during apoptosis; which facilitates apoptotic chromatin condensation. Also phosphorylated on Ser-15 in response to DNA double strand breaks (DSBs), and in correlation with somatic hypermutation and immunoglobulin class-switch recombination. Post-translationally, glcNAcylation at Ser-113 promotes monoubiquitination of Lys-121. It fluctuates in response to extracellular glucose, and associates with transcribed genes. ADP-ribosylated by PARP1 or PARP2 on Ser-7 (H2BS6ADPr) in response to DNA damage. H2BS6ADPr promotes recruitment of CHD1L. Poly ADP-ribosylation on Glu-36 (H2BE35ADPr) by PARP1 regulates adipogenesis: it inhibits phosphorylation at Ser-37 (H2BS36ph), thereby blocking expression of pro-adipogenetic genes. In terms of processing, crotonylation (Kcr) is specifically present in male germ cells and marks testis-specific genes in post-meiotic cells, including X-linked genes that escape sex chromosome inactivation in haploid cells. Crotonylation marks active promoters and enhancers and confers resistance to transcriptional repressors. It is also associated with post-meiotically activated genes on autosomes. Post-translationally, lactylated in macrophages by EP300/P300 by using lactoyl-CoA directly derived from endogenous or exogenous lactate, leading to stimulates gene transcription.

It localises to the nucleus. The protein resides in the chromosome. In terms of biological role, core component of nucleosome. Nucleosomes wrap and compact DNA into chromatin, limiting DNA accessibility to the cellular machineries which require DNA as a template. Histones thereby play a central role in transcription regulation, DNA repair, DNA replication and chromosomal stability. DNA accessibility is regulated via a complex set of post-translational modifications of histones, also called histone code, and nucleosome remodeling. The chain is Histone H2B type 1-H from Homo sapiens (Human).